Consider the following 427-residue polypeptide: Homoprotocatechuate catabolism bifunctional isomerase/decarboxylase (427 aa).

Approximate repeat units lie at residues 1–202 and 203–405; these read MKGT…LENP and VVDE…VGDE. Residues Glu-276, Glu-278, and Asp-307 each coordinate a divalent metal cation.

This sequence belongs to the FAH family. In terms of assembly, monomer. It depends on Mg(2+) as a cofactor.

It catalyses the reaction (2E,4Z)-5-hydroxypenta-2,4-diene-1,2,5-tricarboxylate = (3E,5R)-5-carboxy-2-oxohept-3-enedioate. It carries out the reaction (3E,5R)-5-carboxy-2-oxohept-3-enedioate + H(+) = (4Z)-2-oxohept-4-enedioate + CO2. The protein operates within aromatic compound metabolism; 4-hydroxyphenylacetate degradation; pyruvate and succinate semialdehyde from 4-hydroxyphenylacetate: step 4/7. Its pathway is aromatic compound metabolism; 4-hydroxyphenylacetate degradation; pyruvate and succinate semialdehyde from 4-hydroxyphenylacetate: step 5/7. Its function is as follows. Decarboxylates OPET (5-oxo-pent-3-ene-1,2,5-tricarboxylic acid) into HHDD (2-hydroxy-hept-2,4-diene-1,7-dioate) and isomerizes it to OHED (2-oxo-hept-3-ene-1,7-dioate). In Escherichia coli, this protein is Homoprotocatechuate catabolism bifunctional isomerase/decarboxylase (hpcE).